A 418-amino-acid chain; its full sequence is Protein-lysine 6-oxidase (418 aa).

Positions 1-20 (MRFAWTALLGSLQLCALVRC) are cleaved as a signal peptide. Positions 21-169 (APPAASHRQP…NRVEVDGMVG (149 aa)) are cleaved as a propeptide — removed by BMP1. The interval 63–84 (YQPQRRRDPGATAPGAANATAP) is disordered. The span at 72 to 84 (GATAPGAANATAP) shows a compositional bias: low complexity. Asn80, Asn96, and Asn143 each carry an N-linked (GlcNAc...) asparagine glycan. Residues 130–175 (TSGAHDAGTSRADNQTAPGEVPTLSNLRPPNRVEVDGMVGDDPYNP) are disordered. Over residues 140–157 (RADNQTAPGEVPTLSNLR) the composition is skewed to polar residues. Tyr188 bears the Sulfotyrosine mark. Residues 214–418 (PDLVPDPYYI…YASGCTISPY (205 aa)) form a lysyl-oxidase like region. Cystine bridges form between Cys239–Cys245, Cys292–Cys341, Cys325–Cys331, Cys352–Cys362, and Cys399–Cys413. 3 residues coordinate Cu cation: His293, His295, and His297. A cross-link (lysine tyrosylquinone (Lys-Tyr)) is located at residues 321–356 (KASFCLEDTSCDYGYHRRFACTAHTQGLSPGCYDTY). At Tyr356 the chain carries 2',4',5'-topaquinone.

The protein belongs to the lysyl oxidase family. In terms of assembly, interacts with MFAP4. Interacts (via propeptide) with EFEMP2; this interaction is strong and facilitates formation of ternary complexes with ELN during elastic fiber assembly; this interaction limits interaction of EFEMP2 with FBLN5. Cu cation serves as cofactor. It depends on lysine tyrosylquinone residue as a cofactor. The lysine tyrosylquinone cross-link (LTQ) is generated by condensation of the epsilon-amino group of a lysine with a topaquinone produced by oxidation of tyrosine. Post-translationally, proteolytically cleaved by BMP1 which removes the propeptide. Also proteolytically cleaved by ADAMTS2 and ADAMTS14, but not by ADAMTS3, at an additional cleavage site downstream of the BMP1 cleavage site. The propeptide plays a role in directing the deposition of this enzyme to elastic fibers, via interaction with tropoelastin. Cleavage by BMP1 to remove the propeptide does not increase enzymatic activity but increases binding to collagen. Cleavage by ADAMTS2 produces a form with reduced collagen-binding activity. In terms of processing, sulfated at Tyr-188 and also at either Tyr-184 or Tyr-185 which enhances binding to collagen.

It is found in the secreted. The protein resides in the extracellular space. It carries out the reaction L-lysyl-[protein] + O2 + H2O = (S)-2-amino-6-oxohexanoyl-[protein] + H2O2 + NH4(+). In terms of biological role, responsible for the post-translational oxidative deamination of peptidyl lysine residues in precursors to fibrous collagen and elastin. Regulator of Ras expression. May play a role in tumor suppression. Plays a role in the aortic wall architecture. In Bos taurus (Bovine), this protein is Protein-lysine 6-oxidase.